The chain runs to 598 residues: MAQVAGKKLTVAPEAAKPPGIPGSSSAVKEIPEILVDPRTRRRYLRGRFLGKGGFAKCYEITDLESREVFAGKIVPKTMLLKPHQKDKMTMEIAIQRSLDHRHVVGFHGFFEDNDFVYVVLELCRRRSLLELHKRRKAVTEPEARYYLKQTISGCQYLHSNRVIHRDLKLGNLFLNDEMEVKIGDFGLATKVEYDGERKKTLCGTPNYIAPEVLGKKGHSFEVDIWSIGCIMYTLLVGKPPFETSCLKETYMRIKKNEYSIPKHINPVAAALIQKMLRSDPTSRPTIDDLLNDEFFTSGYIPSRLPTTCLTVPPRFSIAPSTIDQSLRKPLTAINKGQDSPLVEKQVAPAKEEEMQQPEFTEPADCYLSEMLQQLTCLNAVKPSERALIRQEEAEDPASIPIFWISKWVDYSDKYGLGYQLCDNSVGVLFNDSTRLIMYNDGDSLQYIERNNTESYLNVRSYPTTLTKKITLLKYFRNYMSEHLLKAGANTTPREGDELARLPFLRTWFRTRSAIILHLSNGTVQINFFQDHTKIILCPLMAAVSYIDEKREFRTYKLSLIQEFGCCKELASRLRYARTMVEKLQSSKSAVAHVKASA.

Residues 1–23 (MAQVAGKKLTVAPEAAKPPGIPG) are disordered. A Phosphothreonine; by PKA; in vitro modification is found at threonine 10. A phosphoserine mark is found at serine 25 and serine 26. The region spanning 44–296 (YLRGRFLGKG…IDDLLNDEFF (253 aa)) is the Protein kinase domain. Residues 50 to 58 (LGKGGFAKC), lysine 73, and glutamate 122 each bind ATP. Aspartate 167 (proton acceptor) is an active-site residue. Residues 169-172 (KLGN) and aspartate 185 contribute to the ATP site. The segment at 185–212 (DFGLATKVEYDGERKKTLCGTPNYIAPE) is activation loop. Threonine 201 is subject to Phosphothreonine; by PKA. A phosphoserine; by autocatalysis mark is found at serine 260 and serine 326. A D-box that targets the protein for proteasomal degradation in anaphase motif is present at residues 328–331 (RKPL). The residue at position 340 (serine 340) is a Phosphoserine; by CDK1. The 79-residue stretch at 404–482 (WISKWVDYSD…LKYFRNYMSE (79 aa)) folds into the POLO box 1 domain. Residues 487–501 (AGANTTPREGDELAR) form a linker region. A POLO box 2 domain is found at 504–586 (FLRTWFRTRS…ARTMVEKLQS (83 aa)). Positions 532 to 534 (HTK) are important for interaction with phosphorylated proteins.

This sequence belongs to the protein kinase superfamily. Ser/Thr protein kinase family. In terms of assembly, interacts with plk1 and kif2a. Interacts with fbxo5. Activated by phosphorylation on Thr-201 during M phase. Phosphorylated by stk10, leading to activation during oocyte maturation. Post-translationally, ubiquitinated by the anaphase promoting complex/cyclosome (APC/C) in anaphase and following DNA damage, leading to its degradation by the proteasome. Protein levels are down-regulated by proteasomal degradation in anaphase.

It is found in the nucleus. It localises to the cytoplasm. The protein resides in the cytoskeleton. The protein localises to the microtubule organizing center. Its subcellular location is the centrosome. It is found in the spindle. It localises to the midbody. It catalyses the reaction L-seryl-[protein] + ATP = O-phospho-L-seryl-[protein] + ADP + H(+). It carries out the reaction L-threonyl-[protein] + ATP = O-phospho-L-threonyl-[protein] + ADP + H(+). With respect to regulation, activated by phosphorylation of Thr-201. Its function is as follows. Serine/threonine-protein kinase that performs several important functions throughout M phase of the cell cycle, including the regulation of centrosome maturation and spindle assembly, the removal of cohesins from chromosome arms, the inactivation of anaphase-promoting complex/cyclosome (APC/C) inhibitors, and the regulation of mitotic exit and cytokinesis. Polo-like kinase proteins act by binding and phosphorylating proteins that are already phosphorylated on a specific motif recognized by the POLO box domains. Phosphorylates cdc25, pkmyt1/myt1, stag2/sa2, tpx2. Plays multiple essential roles during mitosis. Phosphorylates the N-terminal domain of cdc25, which leads to cyclin b-cdc2 activation and mitotic entry. Also required for organization of bipolar spindles, and for exit from mitosis. Involved in kinetochore functions and sister chromatid cohesion by phosphorylating stag2/sa2. This chain is Serine/threonine-protein kinase PLK1 (plk1), found in Xenopus laevis (African clawed frog).